Consider the following 278-residue polypeptide: Deoxyribonuclease-1-like 2 (278 aa).

An N-terminal signal peptide occupies residues 1–21; sequence MGWPWAPLTAVWALGVMGATA. Catalysis depends on residues E99 and H150. The cysteines at positions 189 and 225 are disulfide-linked.

The protein belongs to the DNase I family. Mg(2+) serves as cofactor. Requires Ca(2+) as cofactor.

The protein localises to the cytoplasm. It is found in the secreted. In terms of biological role, divalent cation-dependent acid DNA endonuclease involved in the breakdown of the nucleus during corneocyte formation of epidermal keratinocytes. May play an immune role by eliminating harmful DNA released into the extracellular environment by damaged epidermal cells. This chain is Deoxyribonuclease-1-like 2 (Dnase1l2), found in Mus musculus (Mouse).